The sequence spans 73 residues: uncharacterized protein (73 aa).

The stretch at 20-49 forms a coiled coil; that stretch reads NATYNKNLELEKRLAKIRNEIPNKSKLIAT.

This is an uncharacterized protein from Acheta domesticus (House cricket).